Reading from the N-terminus, the 122-residue chain is Small ribosomal subunit protein bS16 (122 aa).

The segment at 87–122 (AQSNPKKALPKKKAQERAAASAAAAEKAAAAAAPEA) is disordered. A compositionally biased stretch (low complexity) spans 103–122 (RAAASAAAAEKAAAAAAPEA).

This sequence belongs to the bacterial ribosomal protein bS16 family.

This Methylocella silvestris (strain DSM 15510 / CIP 108128 / LMG 27833 / NCIMB 13906 / BL2) protein is Small ribosomal subunit protein bS16.